Consider the following 123-residue polypeptide: Large ribosomal subunit protein uL14c (123 aa).

It belongs to the universal ribosomal protein uL14 family. As to quaternary structure, part of the 50S ribosomal subunit.

The protein localises to the plastid. It is found in the chloroplast. Functionally, binds to 23S rRNA. The sequence is that of Large ribosomal subunit protein uL14c from Brachypodium distachyon (Purple false brome).